The sequence spans 92 residues: DNA-binding protein HU-alpha (92 aa).

This sequence belongs to the bacterial histone-like protein family. Heterodimer of an alpha and a beta chain.

Functionally, histone-like DNA-binding protein which is capable of wrapping DNA to stabilize it, and thus to prevent its denaturation under extreme environmental conditions. This Burkholderia pseudomallei (strain K96243) protein is DNA-binding protein HU-alpha (hupA).